The sequence spans 182 residues: CDP-diacylglycerol--glycerol-3-phosphate 3-phosphatidyltransferase (182 aa).

Residues 1–12 (MQLNIPTWLTLF) lie on the Cytoplasmic side of the membrane. A helical membrane pass occupies residues 13–37 (RVVLIPFFVLAFYLPFVWAPMVCAI). Residues 38–60 (IFVFAAATDWFDGFLARRWKQTT) lie on the Periplasmic side of the membrane. Residues 61–81 (RFGAFLDPVADKVMVAVALVL) form a helical membrane-spanning segment. At 82 to 86 (VAEHY) the chain is on the cytoplasmic side. A helical membrane pass occupies residues 87-107 (HSWWITLPAATMIAREIIISS). Residues 108-145 (LREWMAEIGKRSSVAVSWVGKVKTMAQMGSLVGLLWRP) lie on the Periplasmic side of the membrane. A helical membrane pass occupies residues 146 to 168 (DHNVELASFVLLYIAAVLTFWSM). At 169 to 181 (FQYLNAAWSDLLE) the chain is on the cytoplasmic side.

It belongs to the CDP-alcohol phosphatidyltransferase class-I family.

Its subcellular location is the cell inner membrane. It catalyses the reaction a CDP-1,2-diacyl-sn-glycerol + sn-glycerol 3-phosphate = a 1,2-diacyl-sn-glycero-3-phospho-(1'-sn-glycero-3'-phosphate) + CMP + H(+). It functions in the pathway phospholipid metabolism; phosphatidylglycerol biosynthesis; phosphatidylglycerol from CDP-diacylglycerol: step 1/2. Its function is as follows. Catalyzes the conversion of cytidine diphosphate diacylglycerol (CDP-DG) and glycerol 3-phosphate into phosphatidylglycerol. Essential for the synthesis of anionic phospholipids, thereby playing a role in balancing the ratio of zwitterionic and anionic phospholipids, which is thought to be important for normal membrane function. The chain is CDP-diacylglycerol--glycerol-3-phosphate 3-phosphatidyltransferase from Yersinia pestis bv. Antiqua (strain Antiqua).